A 394-amino-acid chain; its full sequence is Large ribosomal subunit protein bL27m (394 aa).

The N-terminal 34 residues, 1–34 (MSFIKQVGKLIRPNDYSSSIFQTSFLNNVIQVRT), are a transit peptide targeting the mitochondrion. Disordered regions lie at residues 36–57 (TKRA…LGPK) and 145–181 (AEAE…QRAS). Residues 145–170 (AEAEKEENHMSRKEFLQQPELEKTRQ) show a composition bias toward basic and acidic residues.

This sequence belongs to the bacterial ribosomal protein bL27 family.

Its subcellular location is the mitochondrion. Functionally, component of the large subunit of mitochondrial ribosome. This is Large ribosomal subunit protein bL27m (MRPL2) from Debaryomyces hansenii (strain ATCC 36239 / CBS 767 / BCRC 21394 / JCM 1990 / NBRC 0083 / IGC 2968) (Yeast).